The sequence spans 427 residues: Glucose-6-phosphate isomerase (427 aa).

Glu281 (proton donor) is an active-site residue. Residues His302 and Lys417 contribute to the active site.

It belongs to the GPI family.

It is found in the cytoplasm. It carries out the reaction alpha-D-glucose 6-phosphate = beta-D-fructose 6-phosphate. Its pathway is carbohydrate biosynthesis; gluconeogenesis. The protein operates within carbohydrate degradation; glycolysis; D-glyceraldehyde 3-phosphate and glycerone phosphate from D-glucose: step 2/4. Functionally, catalyzes the reversible isomerization of glucose-6-phosphate to fructose-6-phosphate. This Mycoplasmopsis pulmonis (strain UAB CTIP) (Mycoplasma pulmonis) protein is Glucose-6-phosphate isomerase.